Here is a 705-residue protein sequence, read N- to C-terminus: MARTTPIERYRNFGIMAHIDAGKTTTSERILFYTGVSHKIGEVHDGAAVMDWMEQEQERGITITSAATTAFWTGMDKSMPQHRFNIIDTPGHVDFTIEVERSLRVLDGAVFVLCAVGGVQPQSETVWRQANKYSVPRMAFVNKMDRTGANFDKVVEQLKARLGAYAVPMQVPIGAEDGFEGVVDLLKMKAIHWDTASQGTTFEYRDIPADLVDVATEARSFMVEAAAEASEALMDKYLNDGDLSEDEILSGLRERTLKVEIVPVFCGSAFKNKGVQAMLDGVVHLLPSPADRPPVQGIDENEKEDTRDATDTAPFSALAFKIMTDPFVGSLTFFRVYSGTLNSGDQVYNPVKSKKERVGRILQMHSNNREEIKEVRAGDIAAAVGLKDVTTGDTLCAQDKIITLERMVFPEPVISMAVEPKTKSDQEKMGMALGRLAQEDPSFRVKTDEESGQTIISGMGELHLDIIVDRMRREFNVEANVGKPQVAYRETIRKSDVKSDYKHAKQSGGKGQYGHVVIELSPMTEEDRKNDSVKDDFLFINDITGGIIPKEFIPSVEKGLRETITSGPIAGFPVVGVKVKLVFGSYHDVDSSEMAFKLAASMAFKQGFAKASPVLLEPIMKVEIVSPEDYLGDVMGDVSRRRGVLQGQDDSPSGKIINAMIPLGEMFGYATSLRSMSQGRATFSMEFDHYEEAPANIADAVTKKG.

Residues 8-290 (ERYRNFGIMA…GVVHLLPSPA (283 aa)) form the tr-type G domain. Residues 17–24 (AHIDAGKT), 88–92 (DTPGH), and 142–145 (NKMD) each bind GTP. Residues 290–309 (ADRPPVQGIDENEKEDTRDA) form a disordered region.

Belongs to the TRAFAC class translation factor GTPase superfamily. Classic translation factor GTPase family. EF-G/EF-2 subfamily.

Its subcellular location is the cytoplasm. Its function is as follows. Catalyzes the GTP-dependent ribosomal translocation step during translation elongation. During this step, the ribosome changes from the pre-translocational (PRE) to the post-translocational (POST) state as the newly formed A-site-bound peptidyl-tRNA and P-site-bound deacylated tRNA move to the P and E sites, respectively. Catalyzes the coordinated movement of the two tRNA molecules, the mRNA and conformational changes in the ribosome. The chain is Elongation factor G from Xanthomonas campestris pv. campestris (strain 8004).